Reading from the N-terminus, the 198-residue chain is ATP-dependent Clp protease proteolytic subunit (198 aa).

Serine 98 functions as the Nucleophile in the catalytic mechanism. Histidine 123 is a catalytic residue.

The protein belongs to the peptidase S14 family. In terms of assembly, fourteen ClpP subunits assemble into 2 heptameric rings which stack back to back to give a disk-like structure with a central cavity, resembling the structure of eukaryotic proteasomes.

It localises to the cytoplasm. It catalyses the reaction Hydrolysis of proteins to small peptides in the presence of ATP and magnesium. alpha-casein is the usual test substrate. In the absence of ATP, only oligopeptides shorter than five residues are hydrolyzed (such as succinyl-Leu-Tyr-|-NHMec, and Leu-Tyr-Leu-|-Tyr-Trp, in which cleavage of the -Tyr-|-Leu- and -Tyr-|-Trp bonds also occurs).. Functionally, cleaves peptides in various proteins in a process that requires ATP hydrolysis. Has a chymotrypsin-like activity. Plays a major role in the degradation of misfolded proteins. The polypeptide is ATP-dependent Clp protease proteolytic subunit (Listeria innocua serovar 6a (strain ATCC BAA-680 / CLIP 11262)).